The following is a 240-amino-acid chain: Orotidine 5'-phosphate decarboxylase (240 aa).

Residues aspartate 10, lysine 33, 60–69 (DLKLHDIPNT), threonine 123, arginine 185, glutamine 194, glycine 214, and arginine 215 contribute to the substrate site. Catalysis depends on lysine 62, which acts as the Proton donor.

It belongs to the OMP decarboxylase family. Type 1 subfamily. As to quaternary structure, homodimer.

It carries out the reaction orotidine 5'-phosphate + H(+) = UMP + CO2. It functions in the pathway pyrimidine metabolism; UMP biosynthesis via de novo pathway; UMP from orotate: step 2/2. Functionally, catalyzes the decarboxylation of orotidine 5'-monophosphate (OMP) to uridine 5'-monophosphate (UMP). This Lactobacillus delbrueckii subsp. bulgaricus (strain ATCC 11842 / DSM 20081 / BCRC 10696 / JCM 1002 / NBRC 13953 / NCIMB 11778 / NCTC 12712 / WDCM 00102 / Lb 14) protein is Orotidine 5'-phosphate decarboxylase.